We begin with the raw amino-acid sequence, 176 residues long: Adenine phosphoribosyltransferase (176 aa).

It belongs to the purine/pyrimidine phosphoribosyltransferase family. Homodimer.

The protein localises to the cytoplasm. The catalysed reaction is AMP + diphosphate = 5-phospho-alpha-D-ribose 1-diphosphate + adenine. The protein operates within purine metabolism; AMP biosynthesis via salvage pathway; AMP from adenine: step 1/1. Its function is as follows. Catalyzes a salvage reaction resulting in the formation of AMP, that is energically less costly than de novo synthesis. This chain is Adenine phosphoribosyltransferase, found in Borreliella burgdorferi (strain ZS7) (Borrelia burgdorferi).